We begin with the raw amino-acid sequence, 359 residues long: Peptide chain release factor 1 (359 aa).

Glutamine 235 carries the N5-methylglutamine modification.

It belongs to the prokaryotic/mitochondrial release factor family. In terms of processing, methylated by PrmC. Methylation increases the termination efficiency of RF1.

The protein localises to the cytoplasm. Its function is as follows. Peptide chain release factor 1 directs the termination of translation in response to the peptide chain termination codons UAG and UAA. The sequence is that of Peptide chain release factor 1 from Ehrlichia ruminantium (strain Gardel).